The primary structure comprises 311 residues: Pyrimidine-specific ribonucleoside hydrolase RihA (311 aa).

The active site involves His-240.

It belongs to the IUNH family. RihA subfamily.

In terms of biological role, hydrolyzes cytidine or uridine to ribose and cytosine or uracil, respectively. The polypeptide is Pyrimidine-specific ribonucleoside hydrolase RihA (Salmonella paratyphi B (strain ATCC BAA-1250 / SPB7)).